A 376-amino-acid chain; its full sequence is MNDVLDLTCDLIARASVTPEDAGCQALLAGRLTAAGFACEHLRLGEVDNLWATHGSGAPVLVLLGHTDVVPPGPREAWTSDPFDPQIRDGVLYGRGVADMKGSVAAFVVAAEQFVAAHRAHAGTLAVLLTSDEEGDAIDGVRRVANLFLERGQAIDWCITGEPSSTERLGDLLRVGRRGSLSGTLTVKGVQGHVAYPHKARNPIHLAAPALAELVARQWDDGFESFPPTSLQVSNIHAGTGANNVIPGELQVAFNLRYTPHWDAPRLEAEITALLDRHALDYALRWHRSGEPFYTPEGRLRSVAREVLGAFAGAPPEESTGGGTSDARFIAPLGAQCIEVGPVNASIHQVDEHVRVADLQALPALYRTLIERLLIE.

Zn(2+) is bound at residue His-66. Residue Asp-68 is part of the active site. Zn(2+) is bound at residue Asp-99. Catalysis depends on Glu-133, which acts as the Proton acceptor. The Zn(2+) site is built by Glu-134, Glu-162, and His-348.

Belongs to the peptidase M20A family. DapE subfamily. Homodimer. Requires Zn(2+) as cofactor. Co(2+) is required as a cofactor.

It catalyses the reaction N-succinyl-(2S,6S)-2,6-diaminopimelate + H2O = (2S,6S)-2,6-diaminopimelate + succinate. It functions in the pathway amino-acid biosynthesis; L-lysine biosynthesis via DAP pathway; LL-2,6-diaminopimelate from (S)-tetrahydrodipicolinate (succinylase route): step 3/3. Its function is as follows. Catalyzes the hydrolysis of N-succinyl-L,L-diaminopimelic acid (SDAP), forming succinate and LL-2,6-diaminopimelate (DAP), an intermediate involved in the bacterial biosynthesis of lysine and meso-diaminopimelic acid, an essential component of bacterial cell walls. This chain is Succinyl-diaminopimelate desuccinylase, found in Xanthomonas oryzae pv. oryzae (strain MAFF 311018).